The chain runs to 646 residues: ATP-dependent zinc metalloprotease FtsH (646 aa).

The interval 1–27 (MTNNQTDRPRPPGPESRRFDNNDKNNR) is disordered. Topologically, residues 1–35 (MTNNQTDRPRPPGPESRRFDNNDKNNRNRWGPIPS) are cytoplasmic. Positions 7–26 (DRPRPPGPESRRFDNNDKNN) are enriched in basic and acidic residues. Residues 36–56 (WAWIVLIVALLLNWLVAPILF) traverse the membrane as a helical segment. At 57-144 (PEGKGAVSIP…QPESSTRSLL (88 aa)) the chain is on the extracellular side. Residues 145–165 (LSILISFGPTILFFLLFLWLI) traverse the membrane as a helical segment. The Cytoplasmic segment spans residues 166–646 (SKAQSSQQGL…GLGEKQPEPA (481 aa)). Residue 237–244 (GPPGTGKT) coordinates ATP. H459 serves as a coordination point for Zn(2+). The active site involves E460. The Zn(2+) site is built by H463 and D535.

The protein in the central section; belongs to the AAA ATPase family. In the C-terminal section; belongs to the peptidase M41 family. In terms of assembly, homohexamer. The cofactor is Zn(2+).

Its subcellular location is the cell membrane. Functionally, acts as a processive, ATP-dependent zinc metallopeptidase for both cytoplasmic and membrane proteins. Plays a role in the quality control of integral membrane proteins. This is ATP-dependent zinc metalloprotease FtsH from Thermobaculum terrenum (strain ATCC BAA-798 / CCMEE 7001 / YNP1).